We begin with the raw amino-acid sequence, 70 residues long: Small ribosomal subunit protein bS21 (70 aa).

The segment at 39–70 is disordered; it reads EKPTTERKRKKAAAVSRTRKRLRSQMLPKKLY. A compositionally biased stretch (basic residues) spans 45–61; it reads RKRKKAAAVSRTRKRLR.

It belongs to the bacterial ribosomal protein bS21 family.

In Ralstonia nicotianae (strain ATCC BAA-1114 / GMI1000) (Ralstonia solanacearum), this protein is Small ribosomal subunit protein bS21.